A 459-amino-acid chain; its full sequence is MNESVPDSVEDNGNSVPANGLLVLPDNDHEEGGVGSPQRSNSVESPGGSVHSTRKGFGLKKWRRIKRDGPVRDEAAPVDDGSKLLKRGLAGLVNPPSKHVEFSSVEARQSSEGSVGSVNMVHHPGVANGFSPDIGCMFAVGQAFEKSEEHSGNTIGGKNVVGGKVVSGSQEKLWSDTIKRASEERGDIEKEKPCSSLDSDLRSSDFVFSTGSVSVGNHGEKDERLTMNYIGGFSNEGQVKEEVQTYSRSENGNKEDDGESKKNNNHWADKDALADSIRSFAVLQEVLWKEVQSFQELGKESVLLHSNTDELSSDQPSHQNCKEDNSTSSGSKALILKEKVKLLEHKLEEARAALEAKEARIQELENSKIESELECIFQRKIETEIEHLMLTRSLSSLQVLQETKKLHSLKEDPVSNRGNILGKTCKLGFYILTQLILLVSILRFLVLQFSPASRLVIPT.

Residues 1 to 17 show a composition bias toward polar residues; sequence MNESVPDSVEDNGNSVP. The disordered stretch occupies residues 1–78; sequence MNESVPDSVE…GPVRDEAAPV (78 aa). Basic residues predominate over residues 52–66; sequence STRKGFGLKKWRRIK. 2 short sequence motifs (nuclear localization signal) span residues 60-61 and 63-64; these read KK and RR. The segment covering 67 to 78 has biased composition (basic and acidic residues); the sequence is RDGPVRDEAAPV. Positions 86–87 match the Nuclear localization signal 3 motif; it reads KR. 2 disordered regions span residues 240-266 and 308-330; these read KEEVQTYSRSENGNKEDDGESKKNNNH and TDELSSDQPSHQNCKEDNSTSSG. A compositionally biased stretch (basic and acidic residues) spans 251-266; it reads NGNKEDDGESKKNNNH. Positions 308–319 are enriched in polar residues; it reads TDELSSDQPSHQ. The stretch at 331-375 forms a coiled coil; the sequence is SKALILKEKVKLLEHKLEEARAALEAKEARIQELENSKIESELEC. Residues 426–459 form the KASH domain; that stretch reads KLGFYILTQLILLVSILRFLVLQFSPASRLVIPT. The helical transmembrane segment at 427–447 threads the bilayer; it reads LGFYILTQLILLVSILRFLVL.

In terms of assembly, component of Ran complexes at least composed of WIT1 or WIT2, RANGAP1 or RANGAP2, and WIP1 or WIP2 or WIP3. Interacts with RANGAP1, WPP1/MAF1, and WPP2/MAF2. Interacts with SUN1 and SUN2. Core component of the LINC complex which is composed of inner nuclear membrane SUN domain-containing proteins coupled to outer nuclear membrane WIP and WIT proteins. The LINC complex also involves nucleoskeletal proteins CRWN/LINC and possibly KAKU4 and the cytoskeletal myosin KAKU1. Interacts with WIT2. As to expression, expressed in seedlings, roots, stems, leaves, and flowers.

The protein resides in the nucleus envelope. Its subcellular location is the nucleus membrane. Mediates and enhances the nuclear envelope docking of RANGAP proteins mediated by WIT1 and WIT2 in the undifferentiated cells of root tips. As component of the SUN-WIP-WIT2-KAKU1 complex, mediates the transfer of cytoplasmic forces to the nuclear envelope (NE), leading to nuclear shape changes. The chain is WPP domain-interacting protein 3 (WIP3) from Arabidopsis thaliana (Mouse-ear cress).